Reading from the N-terminus, the 284-residue chain is 2-dehydro-3-deoxyphosphooctonate aldolase (284 aa).

This sequence belongs to the KdsA family.

The protein localises to the cytoplasm. The enzyme catalyses D-arabinose 5-phosphate + phosphoenolpyruvate + H2O = 3-deoxy-alpha-D-manno-2-octulosonate-8-phosphate + phosphate. It participates in carbohydrate biosynthesis; 3-deoxy-D-manno-octulosonate biosynthesis; 3-deoxy-D-manno-octulosonate from D-ribulose 5-phosphate: step 2/3. The protein operates within bacterial outer membrane biogenesis; lipopolysaccharide biosynthesis. The polypeptide is 2-dehydro-3-deoxyphosphooctonate aldolase (Sodalis glossinidius (strain morsitans)).